A 1083-amino-acid polypeptide reads, in one-letter code: Ubiquitin-protein ligase E3C (1083 aa).

Composition is skewed to basic and acidic residues over residues 1 to 10 and 20 to 40; these read MFSFEGDFKT and SRKE…RKRE. Positions 1–40 are disordered; sequence MFSFEGDFKTRPKVSLGGASRKEEKASLLHRTQEERRKRE. Positions 1 to 60 are cis-determinant of acceptor ubiquitin-binding; sequence MFSFEGDFKTRPKVSLGGASRKEEKASLLHRTQEERRKREEERRRLKNAVIIQSFIRGYR. The 30-residue stretch at 45-74 folds into the IQ domain; sequence RLKNAVIIQSFIRGYRDRKQQYFIQRSAFD. The segment at 354-386 is disordered; the sequence is ASPTGTGCPDSTSDSEDDNEETDQPNSPEDGRV. Positions 366 to 376 are enriched in acidic residues; sequence SDSEDDNEETD. An HECT domain is found at 744 to 1083; it reads NEPDLKKRIR…IECAAGFELS (340 aa). K903 is covalently cross-linked (Glycyl lysine isopeptide (Lys-Gly) (interchain with G-Cter in ubiquitin); by autocatalysis). C1051 acts as the Glycyl thioester intermediate in catalysis.

This sequence belongs to the UBE3C family. In terms of assembly, interacts with 26S proteasomes. Interacts (via the HECT domain) with UBE2D1 and, less efficiently, with UBE2L3. Post-translationally, autoubiquitinated; promoting its own degradation.

It catalyses the reaction S-ubiquitinyl-[E2 ubiquitin-conjugating enzyme]-L-cysteine + [acceptor protein]-L-lysine = [E2 ubiquitin-conjugating enzyme]-L-cysteine + N(6)-ubiquitinyl-[acceptor protein]-L-lysine.. It functions in the pathway protein modification; protein ubiquitination. In terms of biological role, E3 ubiquitin-protein ligase that specifically catalyzes 'Lys-29'- and 'Lys-48'-linked polyubiquitin chains. Accepts ubiquitin from the E2 ubiquitin-conjugating enzyme UBE2D1 in the form of a thioester and then directly transfers the ubiquitin to targeted substrates. Associates with the proteasome and promotes elongation of ubiquitin chains on substrates bound to the 26S proteasome. Also catalyzes 'Lys-29'- and 'Lys-48'-linked ubiquitination of 26S proteasome subunit ADRM1/RPN13 in response to proteotoxic stress, impairing the ability of the proteasome to bind and degrade ubiquitin-conjugated proteins. Acts as a negative regulator of autophagy by mediating 'Lys-29'- and 'Lys-48'-linked ubiquitination of PIK3C3/VPS34, promoting its degradation. Can assemble unanchored poly-ubiquitin chains in either 'Lys-29'- or 'Lys-48'-linked polyubiquitin chains; with some preference for 'Lys-48' linkages. Acts as a negative regulator of type I interferon by mediating 'Lys-48'-linked ubiquitination of IRF3 and IRF7, leading to their degradation by the proteasome. Catalyzes ubiquitination and degradation of CAND2. This chain is Ubiquitin-protein ligase E3C, found in Mus musculus (Mouse).